The primary structure comprises 185 residues: Elongation factor P (185 aa).

The protein belongs to the elongation factor P family.

The protein localises to the cytoplasm. Its pathway is protein biosynthesis; polypeptide chain elongation. Functionally, involved in peptide bond synthesis. Stimulates efficient translation and peptide-bond synthesis on native or reconstituted 70S ribosomes in vitro. Probably functions indirectly by altering the affinity of the ribosome for aminoacyl-tRNA, thus increasing their reactivity as acceptors for peptidyl transferase. The sequence is that of Elongation factor P from Clostridioides difficile (strain 630) (Peptoclostridium difficile).